A 272-amino-acid chain; its full sequence is Glutamate racemase (272 aa).

Substrate-binding positions include 10-11 (DS) and 42-43 (YG). Cys-73 functions as the Proton donor/acceptor in the catalytic mechanism. Residue 74 to 75 (NT) coordinates substrate. Residue Cys-183 is the Proton donor/acceptor of the active site. 184-185 (TH) provides a ligand contact to substrate.

Belongs to the aspartate/glutamate racemases family.

It carries out the reaction L-glutamate = D-glutamate. It participates in cell wall biogenesis; peptidoglycan biosynthesis. Provides the (R)-glutamate required for cell wall biosynthesis. The sequence is that of Glutamate racemase from Leifsonia xyli subsp. xyli (strain CTCB07).